The primary structure comprises 348 residues: Dihydroorotase (348 aa).

2 residues coordinate Zn(2+): His17 and His19. Substrate contacts are provided by residues 19–21 and Asn45; that span reads HLR. 3 residues coordinate Zn(2+): Lys103, His140, and His178. Lys103 is subject to N6-carboxylysine. His140 is a binding site for substrate. Leu223 contributes to the substrate binding site. Residue Asp251 participates in Zn(2+) binding. Residue Asp251 is part of the active site. Substrate-binding residues include His255 and Ala267.

Belongs to the metallo-dependent hydrolases superfamily. DHOase family. Class II DHOase subfamily. In terms of assembly, homodimer. Zn(2+) serves as cofactor.

It carries out the reaction (S)-dihydroorotate + H2O = N-carbamoyl-L-aspartate + H(+). It participates in pyrimidine metabolism; UMP biosynthesis via de novo pathway; (S)-dihydroorotate from bicarbonate: step 3/3. In terms of biological role, catalyzes the reversible cyclization of carbamoyl aspartate to dihydroorotate. The polypeptide is Dihydroorotase (Escherichia coli (strain SMS-3-5 / SECEC)).